The primary structure comprises 169 residues: Anaerobic nitrite reductase NSHB2 (169 aa).

The Globin domain occupies 16–166 (SFSEEQEALV…LVAAIKQEMK (151 aa)). The Homodimerization motif lies at 49-53 (EVAPS). Heme b contacts are provided by S59, K73, H77, R107, T111, and H112. The Homodimerization signature appears at 119–131 (DAHFEVTRFALLE).

It belongs to the plant globin family. Homodimer. Heme b is required as a cofactor. Expressed in leaves, but not in roots. Present in embryonic organs including embryos, coleoptiles and seminal roots.

It is found in the cytoplasm. The protein resides in the nucleus. The enzyme catalyses Fe(III)-heme b-[protein] + nitric oxide + H2O = Fe(II)-heme b-[protein] + nitrite + 2 H(+). Phytoglobin that reduces nitrite to nitric oxide under anoxic conditions (e.g. during flooding or in waterlogged soil). May not function as an oxygen storage or transport protein. Has an unusually high affinity for O(2) through an hexacoordinate heme iron because of a very low dissociation constant. Promotes tolerance to low potassium K(+) conditions. This chain is Anaerobic nitrite reductase NSHB2, found in Oryza sativa subsp. japonica (Rice).